Consider the following 1556-residue polypeptide: Bromodomain adjacent to zinc finger domain protein 1A (1556 aa).

Residues 1 to 128 (MPLLHRKPFV…EETVEVIRNN (128 aa)) form a required for interaction with the CHRAC1-POLE3 heterodimer. Required for interaction with the CHRAC1-POLE3 heterodimer region. A required for interaction with NCOR1 region spans residues 1-133 (MPLLHRKPFV…VIRNNGARLQ (133 aa)). The 107-residue stretch at 22–128 (EEVFYCKVTN…EETVEVIRNN (107 aa)) folds into the WAC domain. Position 270 is a phosphoserine (Ser-270). A coiled-coil region spans residues 306-397 (KERDKLLKQE…YVEYLKQWSK (92 aa)). Residues 422-487 (PEIFGDALMV…LTAIFQAIAE (66 aa)) form the DDT domain. A coiled-coil region spans residues 634–709 (IEDYVDILRQ…DISIGEEERE (76 aa)). The span at 662-695 (EAAARIRKRKEEKLKEQEQKMKEKQEKLKEDEQR) shows a compositional bias: basic and acidic residues. Disordered stretches follow at residues 662-754 (EAAA…NGFK), 841-877 (PSSF…GPRD), and 941-966 (FHFS…AYDP). The segment at 667–933 (IRKRKEEKLK…QEKSRICAQL (267 aa)) is required for interaction with SMARCA5 and formation of the CHRAC ISWI chromatin remodeling complex. Ser-702 carries the post-translational modification Phosphoserine. The span at 703–713 (IGEEEREDFDT) shows a compositional bias: acidic residues. A compositionally biased stretch (basic and acidic residues) spans 715–726 (IESKDTEQKELD). Over residues 727–736 (QDMVTEDEDD) the composition is skewed to acidic residues. Thr-731 carries the post-translational modification Phosphothreonine. Composition is skewed to polar residues over residues 842-872 (SSFQ…SNID) and 951-965 (SKPT…NAYD). Lys-952 participates in a covalent cross-link: Glycyl lysine isopeptide (Lys-Gly) (interchain with G-Cter in SUMO2). 2 positions are modified to phosphoserine: Ser-960 and Ser-961. The PHD-type zinc finger occupies 1148–1198 (NARCKICRKKGDAENMVLCDGCDRGHHTYCVRPKLKTVPEGDWFCPECRPK). Disordered stretches follow at residues 1202–1376 (RRLS…NFPN) and 1399–1431 (LQES…RQGG). Residues 1213–1258 (ESDEDVEDSMGGEDDEVDGDEEEGQSEEEEYEVEQDEDDSQEEEEV) are compositionally biased toward acidic residues. Residues 1262 to 1276 (KRGRPQVRLPVKTRG) are compositionally biased toward basic residues. The span at 1277–1312 (KLSSSFSSRGQQQEPGRYPSRSQQSTPKTTVSSKTG) shows a compositional bias: polar residues. 9 positions are modified to phosphoserine: Ser-1281, Ser-1320, Ser-1339, Ser-1353, Ser-1363, Ser-1371, Ser-1402, Ser-1413, and Ser-1417. The segment covering 1363 to 1374 (SANNTPENSPNF) has biased composition (polar residues). In terms of domain architecture, Bromo spans 1430 to 1533 (GGVHELSAFE…AFFHIQAQKL (104 aa)). Thr-1547 is modified (phosphothreonine).

It belongs to the WAL family. Component of the ACF-1 ISWI chromatin remodeling complex at least composed of SMARCA1 and BAZ1A, which regulates the spacing of histone octamers on the DNA template to facilitate access to DNA. Within the ACF-1 ISWI chromatin remodeling complex interacts with SMARCA1; the interaction is direct. Component of the ACF-5 ISWI chromatin remodeling complex (also called the ACF complex) at least composed of BAZ1A and SMARCA5/SNF2H, which regulates the spacing of histone octamers on the DNA template to facilitate access to DNA. Within the ACF-5 ISWI chromatin remodeling complex interacts with SMARCA5/SNF2H; the interaction is direct. Component of the CHRAC ISWI chromatin remodeling complex at least composed of SMARCA5/SNF2H, BAZ1A/ACF1, CHRAC1 and POLE3; the complex preferentially binds DNA through the CHRAC1-POLE3 heterodimer and possesses ATP-dependent nucleosome-remodeling activity. Within the complex interacts (via N-terminus) with POLE3-CHRAC1 heterodimer; the interaction is direct and is required for the complex to preferentially bind to DNA. Within the complex interacts with SMARCA5/SNF2H; the interaction is direct and promotes the interaction with the POLE3-CHRAC1 heterodimer. Interacts with NCOR1 (via its RD1 domain); the interaction corepresses a number of NCOR1-regulated genes. In terms of tissue distribution, highly expressed in testis and at low or undetectable levels in other tissues analyzed.

The protein localises to the nucleus. Its function is as follows. Regulatory subunit of the ATP-dependent ACF-1 and ACF-5 ISWI chromatin remodeling complexes, which form ordered nucleosome arrays on chromatin and slide edge- and center-positioned histone octamers away from their original location on the DNA template to facilitate access to DNA during DNA-templated processes such as DNA replication, transcription, and repair. Both complexes regulate the spacing of nucleosomes along the chromatin and have the ability to slide mononucleosomes to the center of a DNA template in an ATP-dependent manner. The ACF-1 ISWI chromatin remodeling complex has a lower ATP hydrolysis rate than the ACF-5 ISWI chromatin remodeling complex. Has a role in sensing the length of DNA which flank nucleosomes, which modulates the nucleosome spacing activity of the ACF-5 ISWI chromatin remodeling complex. Involved in DNA replication and together with SMARCA5/SNF2H is required for replication of pericentric heterochromatin in S-phase. May have a role in nuclear receptor-mediated transcription repression. This Homo sapiens (Human) protein is Bromodomain adjacent to zinc finger domain protein 1A (BAZ1A).